Consider the following 148-residue polypeptide: Lipoprotein MlpH (148 aa).

The signal sequence occupies residues M1–G17. C18 is lipidated: N-palmitoyl cysteine. A lipid anchor (S-diacylglycerol cysteine) is attached at C18. The segment at L26–K61 is disordered. Over residues D40–K61 the composition is skewed to basic and acidic residues.

Belongs to the Multicopy lipoprotein (Mlp) family.

The protein localises to the cell outer membrane. An outer membrane protein that may participate in pathogenesis. Some human Lyme disease patients have antibodies against this protein. The Mlp proteins probably undergo intragenic recombination, generating new alleles. The chain is Lipoprotein MlpH from Borreliella burgdorferi (strain ATCC 35210 / DSM 4680 / CIP 102532 / B31) (Borrelia burgdorferi).